The chain runs to 523 residues: 2-oxopropyl-CoM reductase, carboxylating (523 aa).

53–54 (AA) is a binding site for FAD. R56 provides a ligand contact to 2-oxopropyl-coenzyme M. An FAD-binding site is contributed by S81. Position 82 (C82) interacts with 2-oxopropyl-coenzyme M. C82 and C87 form a disulfide bridge. Position 158 (A158) interacts with FAD. NADP(+) is bound by residues 222–225 (GSKT) and 245–246 (RT). D353 provides a ligand contact to FAD. E360 lines the NADP(+) pocket. M361 lines the FAD pocket. R365 provides a ligand contact to 2-oxopropyl-coenzyme M. F501 contacts FAD.

Belongs to the class-I pyridine nucleotide-disulfide oxidoreductase family. Homodimer. Component II of the aliphatic epoxide carboxylation complex together with components I, III and IV. FAD is required as a cofactor.

It carries out the reaction coenzyme M + acetoacetate + NADP(+) = 2-oxopropyl-coenzyme M + CO2 + NADPH. The protein operates within alkene metabolism; propylene degradation. Inhibited (at 40%) by the coenzyme M analog 2-bromoethanesulfonate (BES). BES is a time-dependent inactivator of dithiothreitol-reduced 2-KPCC, where the redox active cysteines are in the free thiol forms. BES does not inactivate air-oxidized 2-KPCC, where the redox active cysteine pair is in the disulfide form. BES specifically alkylates the interchange thiol that facilitates thioether bond cleavage and enolacetone formation during catalysis. Involved in aliphatic epoxide carboxylation. Catalyzes the reductive cleavage of the thioether bond of 2-oxopropyl-coenzyme M (2-KPC), and the subsequent carboxylation of the ketopropyl cleavage product, yielding the products acetoacetate and free coenzyme M. The polypeptide is 2-oxopropyl-CoM reductase, carboxylating (Xanthobacter autotrophicus (strain ATCC BAA-1158 / Py2)).